A 524-amino-acid polypeptide reads, in one-letter code: Zinc finger CCCH-type with G patch domain-containing protein (524 aa).

Residues 105-142 (SEESQPLGSNDETSTCSKGSEEEEEEEEEEEDNTSGMK) form a disordered region. Over residues 106-122 (EESQPLGSNDETSTCSK) the composition is skewed to polar residues. Residues 125-137 (EEEEEEEEEEEDN) are compositionally biased toward acidic residues. A C3H1-type zinc finger spans residues 184-210 (KAMKPCPFFLDGKCLFNDNCRFSHGQV). The interval 279–298 (RGSDSSSSSSSDEEEDGAAE) is disordered. The 47-residue stretch at 326 to 372 (TRGIGSKLLVRMGYEFGKGLGRNAEGRVEPIQAVVLPKGKSLDQCME) folds into the G-patch domain. Disordered stretches follow at residues 375 to 402 (QRKK…GGAK) and 500 to 524 (GLQQ…MTEF). Basic residues predominate over residues 376-393 (RKKAGGKHKHKTSKRRPK).

The protein localises to the nucleus. Functionally, transcription repressor that specifically binds the 5'-GGAG[GA]A[GA]A-3' consensus sequence. Represses transcription by recruiting the chromatin multiprotein complex NuRD to target promoters. Negatively regulates expression of EGFR, a gene involved in cell proliferation, survival and migration. The protein is Zinc finger CCCH-type with G patch domain-containing protein (zgpat) of Xenopus laevis (African clawed frog).